A 257-amino-acid chain; its full sequence is tRNA-cytidine(32) 2-sulfurtransferase (257 aa).

The PP-loop motif motif lies at 37–42 (SGGKDS). Positions 112, 115, and 202 each coordinate [4Fe-4S] cluster.

This sequence belongs to the TtcA family. In terms of assembly, homodimer. Mg(2+) is required as a cofactor. It depends on [4Fe-4S] cluster as a cofactor.

It is found in the cytoplasm. It catalyses the reaction cytidine(32) in tRNA + S-sulfanyl-L-cysteinyl-[cysteine desulfurase] + AH2 + ATP = 2-thiocytidine(32) in tRNA + L-cysteinyl-[cysteine desulfurase] + A + AMP + diphosphate + H(+). It functions in the pathway tRNA modification. Its function is as follows. Catalyzes the ATP-dependent 2-thiolation of cytidine in position 32 of tRNA, to form 2-thiocytidine (s(2)C32). The sulfur atoms are provided by the cysteine/cysteine desulfurase (IscS) system. The chain is tRNA-cytidine(32) 2-sulfurtransferase from Geobacter metallireducens (strain ATCC 53774 / DSM 7210 / GS-15).